The chain runs to 432 residues: Trigger factor (432 aa).

Residues 161-246 (EDRVTIDFTG…LKKVEERELP (86 aa)) form the PPIase FKBP-type domain.

The protein belongs to the FKBP-type PPIase family. Tig subfamily. As to quaternary structure, homodimer and monomer. In vivo most of the ribosomes are in complex with monomeric TF. Uncomplexed TF, however, is in a monomer-dimer equilibrium with approximately two thirds of TF existing in a dimeric state.

The protein resides in the cytoplasm. The catalysed reaction is [protein]-peptidylproline (omega=180) = [protein]-peptidylproline (omega=0). Its function is as follows. Involved in protein export. Acts as a chaperone by maintaining the newly synthesized protein in an open conformation. Functions as a peptidyl-prolyl cis-trans isomerase. The protein is Trigger factor of Escherichia fergusonii (strain ATCC 35469 / DSM 13698 / CCUG 18766 / IAM 14443 / JCM 21226 / LMG 7866 / NBRC 102419 / NCTC 12128 / CDC 0568-73).